The primary structure comprises 277 residues: MSSFACWSLSLLILFYSPGSGEKAFEVYIWSEKQIVEATESWKINCSTNCAAPDMGGLETPTNKIMLEEHPQGKWKQFLVSNVSKDTVFFCHFTCSGKQHSESLNIRVYQPPAQVTLKLQPPRVFVGEDFTIECTVSPVQPLERLTLSLLRGRETLKNQTFGGAETVPQEATATFNSTALKKDGLNFSCQAELDLRPHGGYIIRSISEYQILEVYEPMQDNQMVIIIVVVSILLFLFVTSVLLCFIFGQHWHRRRTGTYGVLAAWRRLPRAFRARPV.

Residues 1-22 (MSSFACWSLSLLILFYSPGSGE) form the signal peptide. The Extracellular segment spans residues 23–222 (KAFEVYIWSE…EVYEPMQDNQ (200 aa)). 2 consecutive Ig-like C2-type domains span residues 39-98 (TESW…CSGK) and 127-196 (GEDF…LDLR). 5 N-linked (GlcNAc...) asparagine glycosylation sites follow: Asn-45, Asn-82, Asn-158, Asn-176, and Asn-186. 3 disulfide bridges follow: Cys-46-Cys-91, Cys-50-Cys-95, and Cys-134-Cys-189. A helical transmembrane segment spans residues 223–247 (MVIIIVVVSILLFLFVTSVLLCFIF). Topologically, residues 248-277 (GQHWHRRRTGTYGVLAAWRRLPRAFRARPV) are cytoplasmic. Positions 250-277 (HWHRRRTGTYGVLAAWRRLPRAFRARPV) are required for interaction with EZR, MSN and RDX and co-localization to microvilli.

It belongs to the immunoglobulin superfamily. ICAM family. Interacts with RDX, EZR and MSN. As to expression, expressed in endothelial cells and leukocytes. High levels found in lung.

The protein localises to the membrane. It is found in the cell projection. It localises to the microvillus. ICAM proteins are ligands for the leukocyte adhesion protein LFA-1 (integrin alpha-L/beta-2). ICAM2 may play a role in lymphocyte recirculation by blocking LFA-1-dependent cell adhesion. It mediates adhesive interactions important for antigen-specific immune response, NK-cell mediated clearance, lymphocyte recirculation, and other cellular interactions important for immune response and surveillance. This is Intercellular adhesion molecule 2 (Icam2) from Mus musculus (Mouse).